We begin with the raw amino-acid sequence, 142 residues long: MKHLIPLIVMASVVLAVYADRGYGGGRRGGGYGGGGYGGGGGGYGGGGGGYGGGVGGGRGGGGGLGGGRGGGGGVIDGKDDVGLGGGGYGGGLGGGQGGGGGLGGGQGGGGGLGGGRGGGGYGGGGGGYGGGKYGGGKYGRK.

The signal sequence occupies residues 1–19; that stretch reads MKHLIPLIVMASVVLAVYA. Tyr139 is modified (tyrosine amide).

In terms of tissue distribution, expressed in hemocytes (at protein level).

It localises to the secreted. In terms of biological role, antimicrobial protein with bacteriostatic activity against the Gram-negative bacterium E.coli, and very weak activity against the Gram-positive bacterium S.aureus. Lacks activity against the yeast C.albicans. The sequence is that of Ctenidin-3 from Cupiennius salei (American wandering spider).